Here is a 626-residue protein sequence, read N- to C-terminus: Protein ALEX (626 aa).

Disordered regions lie at residues 1 to 29, 173 to 223, 236 to 473, and 556 to 612; these read MMARPVDPQRSPDPTFRSSTRHSGKLEPM, TTAH…AAHP, AAPG…APRS, and AASV…NNSR. Composition is skewed to polar residues over residues 186–195 and 255–270; these read KSTAAASSRQ and GSTTLPSTWTAPQSRL. The segment covering 281-312 has biased composition (basic and acidic residues); the sequence is QIRESEQRDPQLRRKQQRWKEPLMPRREEKYP. The segment covering 337 to 346 has biased composition (low complexity); that stretch reads QPILTPGQPQ. Pro residues predominate over residues 366-399; sequence IPTPGQPLPPQPIPTPGRPLTPQPIPTPGRPLTP. The span at 416-435 shows a compositional bias: low complexity; the sequence is RLLRPGQPMSPQLRQTQGLP. Over residues 436–445 the composition is skewed to pro residues; that stretch reads LPQPLLPPGQ. The segment covering 570–579 has biased composition (basic residues); that stretch reads ALSRSRRYPW. The segment covering 600-611 has biased composition (polar residues); that stretch reads RRNAVSSSTNNS.

Belongs to the ALEX family. Interacts with the N-terminal region of the XLas isoforms of guanine nucleotide-binding protein G(s) subunit alpha.

It localises to the cell membrane. Its subcellular location is the cell projection. The protein resides in the ruffle. Functionally, may inhibit the adenylyl cyclase-stimulating activity of guanine nucleotide-binding protein G(s) subunit alpha which is produced from the same locus in a different open reading frame. This is Protein ALEX from Homo sapiens (Human).